Here is a 983-residue protein sequence, read N- to C-terminus: Alanine--tRNA ligase, mitochondrial (983 aa).

The N-terminal 24 residues, 1 to 24 (MTSTTGLRNLTLSFKKQLTTSTRT), are a transit peptide targeting the mitochondrion. S504 carries the post-translational modification Phosphoserine. 4 residues coordinate Zn(2+): H625, H629, C744, and H748. The residue at position 975 (S975) is a Phosphoserine.

This sequence belongs to the class-II aminoacyl-tRNA synthetase family. In terms of assembly, monomer. Zn(2+) is required as a cofactor.

The protein resides in the cytoplasm. Its subcellular location is the mitochondrion. The catalysed reaction is tRNA(Ala) + L-alanine + ATP = L-alanyl-tRNA(Ala) + AMP + diphosphate. Catalyzes the attachment of alanine to tRNA(Ala) in a two-step reaction: alanine is first activated by ATP to form Ala-AMP and then transferred to the acceptor end of tRNA(Ala). Also edits incorrectly charged tRNA(Ala) via its editing domain. This is Alanine--tRNA ligase, mitochondrial from Saccharomyces cerevisiae (strain ATCC 204508 / S288c) (Baker's yeast).